We begin with the raw amino-acid sequence, 266 residues long: 3-methyl-2-oxobutanoate hydroxymethyltransferase (266 aa).

Mg(2+) is bound by residues D46 and D85. Residues 46-47, D85, and K115 contribute to the 3-methyl-2-oxobutanoate site; that span reads DS. E117 is a binding site for Mg(2+). E183 functions as the Proton acceptor in the catalytic mechanism.

This sequence belongs to the PanB family. As to quaternary structure, homodecamer; pentamer of dimers. The cofactor is Mg(2+).

The protein localises to the cytoplasm. It catalyses the reaction 3-methyl-2-oxobutanoate + (6R)-5,10-methylene-5,6,7,8-tetrahydrofolate + H2O = 2-dehydropantoate + (6S)-5,6,7,8-tetrahydrofolate. It functions in the pathway cofactor biosynthesis; (R)-pantothenate biosynthesis; (R)-pantoate from 3-methyl-2-oxobutanoate: step 1/2. Functionally, catalyzes the reversible reaction in which hydroxymethyl group from 5,10-methylenetetrahydrofolate is transferred onto alpha-ketoisovalerate to form ketopantoate. This is 3-methyl-2-oxobutanoate hydroxymethyltransferase from Trichlorobacter lovleyi (strain ATCC BAA-1151 / DSM 17278 / SZ) (Geobacter lovleyi).